The primary structure comprises 309 residues: Homoserine O-succinyltransferase (309 aa).

Catalysis depends on Cys-142, which acts as the Acyl-thioester intermediate. Residues Lys-163 and Ser-192 each coordinate substrate. His-235 (proton acceptor) is an active-site residue. Glu-237 is an active-site residue. Arg-249 contacts substrate.

It belongs to the MetA family. As to quaternary structure, homodimer.

Its subcellular location is the cytoplasm. It carries out the reaction L-homoserine + succinyl-CoA = O-succinyl-L-homoserine + CoA. Its pathway is amino-acid biosynthesis; L-methionine biosynthesis via de novo pathway; O-succinyl-L-homoserine from L-homoserine: step 1/1. Its function is as follows. Transfers a succinyl group from succinyl-CoA to L-homoserine, forming succinyl-L-homoserine. In Escherichia coli O17:K52:H18 (strain UMN026 / ExPEC), this protein is Homoserine O-succinyltransferase.